The sequence spans 85 residues: Conotoxin Mi15a (85 aa).

Positions 1 to 23 (MEKLTVLILVATVLLTIQVLGQS) are cleaved as a signal peptide. The propeptide occupies 24–49 (DRDKHLKRRPKQYATKRLSARMRGHR). The residue at position 50 (Gln-50) is a Pyrrolidone carboxylic acid.

The protein belongs to the conotoxin O2 superfamily. In terms of processing, contains 4 disulfide bonds. In terms of tissue distribution, expressed by the venom duct.

It localises to the secreted. In Conus miles (Soldier cone), this protein is Conotoxin Mi15a.